The chain runs to 360 residues: Phospho-N-acetylmuramoyl-pentapeptide-transferase (360 aa).

Residues 1-25 are Periplasmic-facing; sequence MLVWLAEHLVKYYSGFNVFSYLTFR. Residues 26–46 form a helical membrane-spanning segment; sequence AIVSLLTALFISLWMGPRMIA. Topologically, residues 47-71 are cytoplasmic; sequence RLQKLSFGQVVRNDGPESHFSKRGT. The chain crosses the membrane as a helical span at residues 72–92; the sequence is PTMGGIMILTAIVISVLLWAY. Proline 93 is a topological domain (periplasmic). Residues 94–114 traverse the membrane as a helical segment; it reads SNPYVWCVLVVLIGYGIIGFV. At 115-131 the chain is on the cytoplasmic side; that stretch reads DDYRKVVRKDTKGLIAR. The helical transmembrane segment at 132–152 threads the bilayer; sequence WKYFWMSVIALGVAFALYLVG. Topologically, residues 153–167 are periplasmic; sequence KDTPATQLVVPFFKD. Residues 168–188 traverse the membrane as a helical segment; that stretch reads VMPQLGLFYILLSYFVIVGTG. The Cytoplasmic portion of the chain corresponds to 189–198; sequence NAVNLTDGLD. A helical transmembrane segment spans residues 199-219; sequence GLAIMPTVFVAAGFALVAWAT. Residues 220–235 are Periplasmic-facing; the sequence is GNMNFANYLHIPYLRH. The helical transmembrane segment at 236 to 256 threads the bilayer; sequence AGELVIVCTAIVGAGLGFLWF. Over 257-262 the chain is Cytoplasmic; that stretch reads NTYPAQ. Residues 263-283 traverse the membrane as a helical segment; sequence VFMGDVGSLALGGALGIIAVL. Residues 284 to 287 are Periplasmic-facing; the sequence is LRQE. The helical transmembrane segment at 288–308 threads the bilayer; sequence FLLVIMGGVFVVETLSVILQV. Over 309–337 the chain is Cytoplasmic; it reads GSFKLRGQRIFRMAPIHHHYELKGWPEPR. The chain crosses the membrane as a helical span at residues 338 to 358; that stretch reads VIVRFWIISLMLVLIGLATLK. At 359–360 the chain is on the periplasmic side; sequence VR.

Belongs to the glycosyltransferase 4 family. MraY subfamily. Mg(2+) serves as cofactor.

Its subcellular location is the cell inner membrane. It catalyses the reaction UDP-N-acetyl-alpha-D-muramoyl-L-alanyl-gamma-D-glutamyl-meso-2,6-diaminopimeloyl-D-alanyl-D-alanine + di-trans,octa-cis-undecaprenyl phosphate = di-trans,octa-cis-undecaprenyl diphospho-N-acetyl-alpha-D-muramoyl-L-alanyl-D-glutamyl-meso-2,6-diaminopimeloyl-D-alanyl-D-alanine + UMP. Its pathway is cell wall biogenesis; peptidoglycan biosynthesis. Its function is as follows. Catalyzes the initial step of the lipid cycle reactions in the biosynthesis of the cell wall peptidoglycan: transfers peptidoglycan precursor phospho-MurNAc-pentapeptide from UDP-MurNAc-pentapeptide onto the lipid carrier undecaprenyl phosphate, yielding undecaprenyl-pyrophosphoryl-MurNAc-pentapeptide, known as lipid I. The chain is Phospho-N-acetylmuramoyl-pentapeptide-transferase from Salmonella agona (strain SL483).